Here is a 58-residue protein sequence, read N- to C-terminus: Rho-conotoxin TIA (58 aa).

The N-terminal stretch at 1–16 is a signal peptide; the sequence is MFTVFLLVVLATTGVS. Residues 17 to 38 constitute a propeptide that is removed on maturation; the sequence is FTLDRASDGGNAVAKKSDVTAR. The interaction with ADRA1B stretch occupies residues 40 to 42; it reads NWR. Intrachain disulfides connect Cys43-Cys49 and Cys44-Cys57. A lacks the Ser-Xaa-Pro motif that is crucial for potent interaction with nAChR region spans residues 45-47; that stretch reads LIP. Cys57 bears the Cysteine amide mark.

The protein belongs to the conotoxin A superfamily. Expressed by the venom duct.

The protein localises to the secreted. Allosteric inhibitor of alpha-1B adrenergic receptors (ADRA1B). Binds to an allosteric modulatory site on transmembrane helix 6 and 7 at the base of extracellular loop 3 of ADRA1B. Also weakly inhibits alpha-1A (ADRA1A) and alpha-1D (ADRA1D) adrenergic receptors in a competitive manner. Potently inhibits contractions of vas deferens, spleen and aorta in response to noradrenaline. May also inhibits nicotinic acetylcholine receptors with a possible distinct nAChR binding mode from other alpha-conotoxins, due to a different three residue motif (lacks the Ser-Xaa-Pro motif). The polypeptide is Rho-conotoxin TIA (Conus tulipa (Fish-hunting cone snail)).